A 228-amino-acid chain; its full sequence is Enolase-phosphatase E1 (228 aa).

The protein belongs to the HAD-like hydrolase superfamily. MasA/MtnC family. Monomer. Requires Mg(2+) as cofactor.

The enzyme catalyses 5-methylsulfanyl-2,3-dioxopentyl phosphate + H2O = 1,2-dihydroxy-5-(methylsulfanyl)pent-1-en-3-one + phosphate. It functions in the pathway amino-acid biosynthesis; L-methionine biosynthesis via salvage pathway; L-methionine from S-methyl-5-thio-alpha-D-ribose 1-phosphate: step 3/6. It participates in amino-acid biosynthesis; L-methionine biosynthesis via salvage pathway; L-methionine from S-methyl-5-thio-alpha-D-ribose 1-phosphate: step 4/6. In terms of biological role, bifunctional enzyme that catalyzes the enolization of 2,3-diketo-5-methylthiopentyl-1-phosphate (DK-MTP-1-P) into the intermediate 2-hydroxy-3-keto-5-methylthiopentenyl-1-phosphate (HK-MTPenyl-1-P), which is then dephosphorylated to form the acireductone 1,2-dihydroxy-3-keto-5-methylthiopentene (DHK-MTPene). The protein is Enolase-phosphatase E1 of Picosynechococcus sp. (strain ATCC 27264 / PCC 7002 / PR-6) (Agmenellum quadruplicatum).